The primary structure comprises 736 residues: Catalase-peroxidase 2 (736 aa).

The segment at residues 91 to 227 is a cross-link (tryptophyl-tyrosyl-methioninium (Trp-Tyr) (with M-253)); it reads WHSAGTYRMG…LAAVQMGLIY (137 aa). Residue H92 is the Proton acceptor of the active site. The segment at residues 227 to 253 is a cross-link (tryptophyl-tyrosyl-methioninium (Tyr-Met) (with W-91)); that stretch reads YVNPEGPDGNPDPVAAAYDIREVFGRM. Residue H268 participates in heme b binding.

It belongs to the peroxidase family. Peroxidase/catalase subfamily. As to quaternary structure, homodimer or homotetramer. The cofactor is heme b. Post-translationally, formation of the three residue Trp-Tyr-Met cross-link is important for the catalase, but not the peroxidase activity of the enzyme.

It catalyses the reaction H2O2 + AH2 = A + 2 H2O. The enzyme catalyses 2 H2O2 = O2 + 2 H2O. Its function is as follows. Bifunctional enzyme with both catalase and broad-spectrum peroxidase activity. Shows peroxidase specificity towards odianisidine, ABTS and pyrogallol, but methoxyphenol and 2-chloronaphthol are not peroxidized. This is Catalase-peroxidase 2 from Burkholderia cenocepacia (strain ATCC BAA-245 / DSM 16553 / LMG 16656 / NCTC 13227 / J2315 / CF5610) (Burkholderia cepacia (strain J2315)).